Consider the following 374-residue polypeptide: uncharacterized protein (374 aa).

This is an uncharacterized protein from Methanocaldococcus jannaschii (strain ATCC 43067 / DSM 2661 / JAL-1 / JCM 10045 / NBRC 100440) (Methanococcus jannaschii).